A 765-amino-acid chain; its full sequence is Protein transport protein sec23-2 (765 aa).

Cys-56, Cys-60, Cys-79, and Cys-82 together coordinate Zn(2+). 2 positions are modified to phosphoserine: Ser-565 and Ser-566.

It belongs to the SEC23/SEC24 family. SEC23 subfamily. The COPII coat is composed of at least 5 proteins: the sec23/24 complex, the sec13/31 complex, and the protein sar1.

The protein resides in the cytoplasm. Its subcellular location is the cytoplasmic vesicle. It is found in the COPII-coated vesicle membrane. It localises to the endoplasmic reticulum membrane. The protein localises to the golgi apparatus membrane. Component of the coat protein complex II (COPII) which promotes the formation of transport vesicles from the endoplasmic reticulum (ER). The coat has two main functions, the physical deformation of the endoplasmic reticulum membrane into vesicles and the selection of cargo molecules. This Schizosaccharomyces pombe (strain 972 / ATCC 24843) (Fission yeast) protein is Protein transport protein sec23-2 (sec232).